We begin with the raw amino-acid sequence, 739 residues long: Adenosylcobalamin-dependent ribonucleoside-triphosphate reductase (739 aa).

Cys-119 and Cys-419 are oxidised to a cystine. Residues 147 to 158 (SMPFSFLFDELM) are effector region-1. An effector region-2 region spans residues 168-313 (ARSNISQIPR…ICNLIGKAVV (146 aa)). Catalysis depends on residues Cys-408 and Glu-410. The segment at 565–626 (FHYGAYLIQR…NPNFASAGTV (62 aa)) is adenosylcobalamin-binding-1. An adenosylcobalamin-binding-2 region spans residues 685–724 (LQQAPKEPIDKETYEKRSQEITGNVEEVFSQLNSDVKDLE).

Belongs to the class II ribonucleoside-triphosphate reductase family. Monomer. The cofactor is adenosylcob(III)alamin.

The enzyme catalyses a 2'-deoxyribonucleoside 5'-triphosphate + [thioredoxin]-disulfide + H2O = a ribonucleoside 5'-triphosphate + [thioredoxin]-dithiol. Its activity is regulated as follows. Allosterically regulated by ATP and dNTP. This is Adenosylcobalamin-dependent ribonucleoside-triphosphate reductase (rtpR) from Lactobacillus leichmannii.